Here is a 99-residue protein sequence, read N- to C-terminus: Carboxysome shell vertex protein CcmL (99 aa).

The 83-residue stretch at 1–83 (MRIAKVRGTV…VDAAVIAIID (83 aa)) folds into the BMV domain.

This sequence belongs to the CcmL/EutN family. CcmL subfamily. In terms of assembly, homopentamer. Interacts with full-length CcmM.

The protein resides in the carboxysome. Probably forms vertices in the carboxysome, a polyhedral inclusion where RuBisCO (ribulose bisphosphate carboxylase, rbcL-rbcS) is sequestered. Has been modeled to induce curvature upon insertion into an otherwise flat hexagonal molecular layer of CcmK subunits. Its function is as follows. Beta-carboxysome assembly initiates when soluble RuBisCO is condensed into a liquid matrix in a pre-carboxysome by the RbcS-like domains of probably both CcmM58 and CcmM35. CcmN interacts with the N-terminus of CcmM58, and then recruits the CcmK2 major shell protein via CcmN's encapsulation peptide. Shell formation requires CcmK proteins and CcmO. CcmL caps the otherwise elongated carboxysome. Once fully encapsulated carboxysomes are formed, they migrate within the cell probably via interactions with the cytoskeleton. This Synechococcus elongatus (strain ATCC 33912 / PCC 7942 / FACHB-805) (Anacystis nidulans R2) protein is Carboxysome shell vertex protein CcmL.